Consider the following 670-residue polypeptide: Eukaryotic translation initiation factor 3 subunit B (670 aa).

The RRM domain occupies 30 to 116; the sequence is KFIVVDNIPV…HTLKVNLLDD (87 aa). WD repeat units follow at residues 183-221, 222-269, 466-507, and 509-553; these read SVSL…QVNL, FEHR…KLRS, LENR…SYGT, and EHLQ…VYSV. A coiled-coil region spans residues 568-600; sequence KFMLTNKEINQIKQNIKKYQEKFDKQDEDDNKA.

It belongs to the eIF-3 subunit B family. As to quaternary structure, component of the eukaryotic translation initiation factor 3 (eIF-3) complex.

It localises to the cytoplasm. RNA-binding component of the eukaryotic translation initiation factor 3 (eIF-3) complex, which is involved in protein synthesis of a specialized repertoire of mRNAs and, together with other initiation factors, stimulates binding of mRNA and methionyl-tRNAi to the 40S ribosome. The eIF-3 complex specifically targets and initiates translation of a subset of mRNAs involved in cell proliferation. The chain is Eukaryotic translation initiation factor 3 subunit B (eif3B) from Dictyostelium discoideum (Social amoeba).